Here is a 60-residue protein sequence, read N- to C-terminus: Large ribosomal subunit protein bL32 (60 aa).

Positions 1–23 (MAVPARHTSKAKKNKRRTHYKLT) are disordered. Residues 7-20 (HTSKAKKNKRRTHY) show a composition bias toward basic residues.

This sequence belongs to the bacterial ribosomal protein bL32 family.

The protein is Large ribosomal subunit protein bL32 of Streptococcus equi subsp. equi (strain 4047).